The following is a 249-amino-acid chain: Putative TrmH family tRNA/rRNA methyltransferase (249 aa).

Residues Gly-196, Ile-216, and Leu-225 each coordinate S-adenosyl-L-methionine.

It belongs to the class IV-like SAM-binding methyltransferase superfamily. RNA methyltransferase TrmH family.

This is Putative TrmH family tRNA/rRNA methyltransferase from Staphylococcus epidermidis (strain ATCC 35984 / DSM 28319 / BCRC 17069 / CCUG 31568 / BM 3577 / RP62A).